Reading from the N-terminus, the 332-residue chain is ATPase GET3 (332 aa).

Residue 32–39 (KGGVGKTT) coordinates ATP. The active site involves Asp-61. ATP is bound by residues Glu-235 and Asn-262. Cys-273 and Cys-276 together coordinate Zn(2+).

It belongs to the arsA ATPase family. As to quaternary structure, homodimer.

The protein resides in the cytoplasm. The protein localises to the endoplasmic reticulum. In terms of biological role, ATPase required for the post-translational delivery of tail-anchored (TA) proteins to the endoplasmic reticulum. Recognizes and selectively binds the transmembrane domain of TA proteins in the cytosol. This complex then targets to the endoplasmic reticulum by membrane-bound receptors, where the tail-anchored protein is released for insertion. This process is regulated by ATP binding and hydrolysis. ATP binding drives the homodimer towards the closed dimer state, facilitating recognition of newly synthesized TA membrane proteins. ATP hydrolysis is required for insertion. Subsequently, the homodimer reverts towards the open dimer state, lowering its affinity for the membrane-bound receptor, and returning it to the cytosol to initiate a new round of targeting. The chain is ATPase GET3 from Mycosarcoma maydis (Corn smut fungus).